The following is a 676-amino-acid chain: Symportin 1 (676 aa).

A compositionally biased stretch (basic residues) spans 1 to 10 (MGKTRRNRVR). The interval 1–28 (MGKTRRNRVRNRTDPIAKPVKPPTDPEL) is disordered. An ARM 1 repeat occupies 183–216 (TILRLLFRLISADIAPQDIYEEAISCLTTLSEDN). The interval 325 to 385 (KGNQGSRESP…EDDEDDDDDS (61 aa)) is disordered. Composition is skewed to acidic residues over residues 338-354 (ADEE…DAMD) and 363-385 (EDQE…DDDS). Residues 420–453 (TAVPQLIRLSNLPIDSDESLTIQSHALSALNNIS) form an ARM 2 repeat.

The protein belongs to the nuclear import and ribosome assembly adapter family. In terms of assembly, component of a hexameric 5S RNP precursor complex, composed of 5S RNA, RRS1, RPF2, RPL5, RPL11 and SYO1; this complex acts as a precursor for ribosome assembly.

Its function is as follows. Involved in ribosomal large subunit assembly. This is Symportin 1 from Chaetomium thermophilum (strain DSM 1495 / CBS 144.50 / IMI 039719) (Thermochaetoides thermophila).